The following is a 488-amino-acid chain: ATP synthase subunit beta (488 aa).

Residue 164-171 coordinates ATP; sequence GGAGVGKT.

It belongs to the ATPase alpha/beta chains family. F-type ATPases have 2 components, CF(1) - the catalytic core - and CF(0) - the membrane proton channel. CF(1) has five subunits: alpha(3), beta(3), gamma(1), delta(1), epsilon(1). CF(0) has four main subunits: a(1), b(1), b'(1) and c(9-12).

Its subcellular location is the cellular thylakoid membrane. The enzyme catalyses ATP + H2O + 4 H(+)(in) = ADP + phosphate + 5 H(+)(out). In terms of biological role, produces ATP from ADP in the presence of a proton gradient across the membrane. The catalytic sites are hosted primarily by the beta subunits. The polypeptide is ATP synthase subunit beta (Prochlorococcus marinus (strain MIT 9211)).